The primary structure comprises 251 residues: Putative cysteine-rich repeat secretory protein 36 (251 aa).

A signal peptide spans Met-1–Ser-28. Gnk2-homologous domains are found at residues Tyr-35–Pro-139 and Tyr-144–Phe-248.

It belongs to the cysteine-rich repeat secretory protein family.

It is found in the secreted. The protein is Putative cysteine-rich repeat secretory protein 36 (CRRSP36) of Arabidopsis thaliana (Mouse-ear cress).